The chain runs to 488 residues: MGALHRAHGQLIKSVQGFGSLQPAAVLVSVFVNPLQFGPAEDFDSYPRDLEADCELASRSGASALWAPSVDQVFPGGASSQFRIQVPSHLQAHLCGAIRPGHFDGVVTVVARLLALVRPEVLVLGEKDWQQLVILRHLVAQLGLPVRVHGVATVRDDDGLACSSRNRYLMTQQRQQALALPQLLARAARESQDGRAVDLAGLRCAWEQLGLEVEYVETVDAFNLQPLHAGRKLCLLAAAVRCGETRLIDHTFLMSRQPIVAIDGPAGAGKSTVTRAFAERLGLLYLDTGAMYRAVTWLTQQHDVDPHDPVAVKTILENLELELEPSQSGPQKVRINGHDVTEAIRSPEVTSSVSVVAAHGCVRKALTAQQQRMGVRGGLVAEGRDIGTAVFPDAELKVFLTASPAERARRRALDLDNRGFPVPDLAELETQIEERDRMDSTREVAPLRQAEDATELISDGMSIEEVIETLIDLFRVQVPEEVWPTPGS.

1–8 provides a ligand contact to ATP; it reads MGALHRAH. Residues 1–251 are pantoate--beta-alanine ligase; sequence MGALHRAHGQ…CGETRLIDHT (251 aa). His-8 functions as the Proton donor in the catalytic mechanism. (R)-pantoate is bound at residue Gln-36. A beta-alanine-binding site is contributed by Gln-36. 125-128 serves as a coordination point for ATP; it reads GEKD. Residue Gln-131 participates in (R)-pantoate binding. ATP-binding positions include Val-154 and 162-165; that span reads CSSR. The segment at 252–488 is cytidylate kinase; sequence FLMSRQPIVA…PEEVWPTPGS (237 aa).

This sequence in the N-terminal section; belongs to the pantothenate synthetase family. In the C-terminal section; belongs to the cytidylate kinase family. Type 1 subfamily.

The protein resides in the cytoplasm. It catalyses the reaction (R)-pantoate + beta-alanine + ATP = (R)-pantothenate + AMP + diphosphate + H(+). It carries out the reaction CMP + ATP = CDP + ADP. The catalysed reaction is dCMP + ATP = dCDP + ADP. The protein operates within cofactor biosynthesis; (R)-pantothenate biosynthesis; (R)-pantothenate from (R)-pantoate and beta-alanine: step 1/1. Its function is as follows. Catalyzes the condensation of pantoate with beta-alanine in an ATP-dependent reaction via a pantoyl-adenylate intermediate. Catalyzes the transfer of a phosphate group from ATP to either CMP or dCMP to form CDP or dCDP and ADP, respectively. This chain is Bifunctional pantoate ligase/cytidylate kinase, found in Prochlorococcus marinus (strain MIT 9303).